We begin with the raw amino-acid sequence, 639 residues long: Tetracycline resistance protein TetW (639 aa).

Residues 1 to 243 (MKIINIGILA…VTGLFQPIGE (243 aa)) form the tr-type G domain. GTP-binding positions include 10–17 (AHVDAGKT), 74–78 (DTPGH), and 128–131 (NKID).

It belongs to the TRAFAC class translation factor GTPase superfamily. Classic translation factor GTPase family. TetM/TetO subfamily.

Abolishes the inhibitory effect of tetracyclin on protein synthesis by a non-covalent modification of the ribosomes. This Butyrivibrio fibrisolvens protein is Tetracycline resistance protein TetW (tetW).